The chain runs to 295 residues: 33 kDa chaperonin (295 aa).

2 cysteine pairs are disulfide-bonded: Cys-237-Cys-239 and Cys-270-Cys-273.

The protein belongs to the HSP33 family. Under oxidizing conditions two disulfide bonds are formed involving the reactive cysteines. Under reducing conditions zinc is bound to the reactive cysteines and the protein is inactive.

It is found in the cytoplasm. In terms of biological role, redox regulated molecular chaperone. Protects both thermally unfolding and oxidatively damaged proteins from irreversible aggregation. Plays an important role in the bacterial defense system toward oxidative stress. This is 33 kDa chaperonin from Shouchella clausii (strain KSM-K16) (Alkalihalobacillus clausii).